The chain runs to 204 residues: Superoxide dismutase [Mn] (204 aa).

H27 is a binding site for Mn(2+). T34 and T70 each carry phosphothreonine. The Mn(2+) site is built by H82, D164, and H168.

It belongs to the iron/manganese superoxide dismutase family. As to quaternary structure, homodimer. Mn(2+) serves as cofactor.

The enzyme catalyses 2 superoxide + 2 H(+) = H2O2 + O2. Functionally, destroys superoxide anion radicals which are normally produced within the cells and which are toxic to biological systems. The chain is Superoxide dismutase [Mn] (sodA) from Bacillus caldotenax.